We begin with the raw amino-acid sequence, 339 residues long: UPF0324 membrane protein spyM18_1033 (339 aa).

Helical transmembrane passes span 7–24 (KLPG…AWYL), 28–50 (FPII…FYGH), 57–79 (GISF…GLNL), 84–106 (AVGM…VAYG), 118–140 (ATLV…APVI), 150–172 (AISV…GQLL), 256–275 (FILF…SFGV), 290–307 (FIVM…LVKL), and 314–336 (AILL…QLSL).

It belongs to the UPF0324 family.

The protein resides in the cell membrane. This chain is UPF0324 membrane protein spyM18_1033, found in Streptococcus pyogenes serotype M18 (strain MGAS8232).